The primary structure comprises 159 residues: 6,7-dimethyl-8-ribityllumazine synthase (159 aa).

Residues Trp-27, 62–64, and 86–88 each bind 5-amino-6-(D-ribitylamino)uracil; these read SWE and VLI. 91–92 serves as a coordination point for (2S)-2-hydroxy-3-oxobutyl phosphate; sequence ST. The active-site Proton donor is His-94. Position 119 (Leu-119) interacts with 5-amino-6-(D-ribitylamino)uracil. Arg-133 provides a ligand contact to (2S)-2-hydroxy-3-oxobutyl phosphate.

In terms of assembly, homopentamer.

It carries out the reaction (2S)-2-hydroxy-3-oxobutyl phosphate + 5-amino-6-(D-ribitylamino)uracil = 6,7-dimethyl-8-(1-D-ribityl)lumazine + phosphate + 2 H2O + H(+). It participates in cofactor biosynthesis; riboflavin biosynthesis; riboflavin from 2-hydroxy-3-oxobutyl phosphate and 5-amino-6-(D-ribitylamino)uracil: step 1/2. Competitively inhibited by riboflavin (Ki of 17 uM). Catalyzes the formation of 6,7-dimethyl-8-ribityllumazine by condensation of 5-amino-6-(D-ribitylamino)uracil with 3,4-dihydroxy-2-butanone 4-phosphate. This is the penultimate step in the biosynthesis of riboflavin. Also binds riboflavin with an unexpected high affinity. This chain is 6,7-dimethyl-8-ribityllumazine synthase (rib4), found in Schizosaccharomyces pombe (strain 972 / ATCC 24843) (Fission yeast).